We begin with the raw amino-acid sequence, 103 residues long: Co-chaperonin GroES (103 aa).

This sequence belongs to the GroES chaperonin family. In terms of assembly, heptamer of 7 subunits arranged in a ring. Interacts with the chaperonin GroEL.

It localises to the cytoplasm. Functionally, together with the chaperonin GroEL, plays an essential role in assisting protein folding. The GroEL-GroES system forms a nano-cage that allows encapsulation of the non-native substrate proteins and provides a physical environment optimized to promote and accelerate protein folding. GroES binds to the apical surface of the GroEL ring, thereby capping the opening of the GroEL channel. This Synechococcus sp. (strain CC9902) protein is Co-chaperonin GroES.